Reading from the N-terminus, the 87-residue chain is Large ribosomal subunit protein bL27 (87 aa).

The tract at residues 1–22 (MAHKKGQGSVKNGRDSRSKRLG) is disordered.

Belongs to the bacterial ribosomal protein bL27 family.

The chain is Large ribosomal subunit protein bL27 from Akkermansia muciniphila (strain ATCC BAA-835 / DSM 22959 / JCM 33894 / BCRC 81048 / CCUG 64013 / CIP 107961 / Muc).